Reading from the N-terminus, the 771-residue chain is Caldesmon (771 aa).

Disordered stretches follow at residues 23–91 (ERLS…ALLE) and 104–599 (LQEA…FSPK). The myosin and calmodulin-binding stretch occupies residues 26 to 199 (SYQRNDDDEE…PKEVPTEENQ (174 aa)). Residue Y27 is modified to Phosphotyrosine. Basic and acidic residues-rich tracts occupy residues 47 to 67 (QERL…EKSE), 104 to 115 (LQEALERQKEFD), 139 to 155 (ITGK…RCEI), 170 to 194 (WRQD…KEVP), 203 to 215 (AVEK…EVVE), 240 to 435 (AADK…ESLP), 442 to 484 (SKKD…RELT), 509 to 518 (GSEKLKEKQQ), and 525 to 592 (DELK…EKKP). Tandem repeats lie at residues 251–265 (EREK…RLKA), 266–278 (EEEK…KQKA), 279–291 (EEEK…RERA), 294–306 (EEEK…RERA), 309–321 (EEER…RERA), 324–336 (EEER…RAKA), 337–349 (EEER…RAKA), 350–362 (EEER…RAKA), 363–375 (EKER…RERA), and 378–390 (EEEK…KARL). Positions 251 to 390 (EREKLEAEEK…KRAAEEKARL (140 aa)) are 10 X 13 AA approximate tandem repeats. The tract at residues 523 to 580 (ELDELKKRREERRKILEEEEQKKKQEEAERKIREEEEKKRMKEEIERRRAEAAEKRQK) is tropomyosin-binding. The residue at position 597 (S597) is a Phosphoserine; by CDK1. Residues 612-644 (LNKSAQKSGMKPAHTTAVVSKIDSRLEQYTSAV) are strong actin-binding. The tract at residues 622-632 (KPAHTTAVVSK) is tropomyosin-binding. A Phosphotyrosine modification is found at Y640. The tract at residues 674-680 (WEKGNVF) is calmodulin-binding. Residues 676–771 (KGNVFSSPGG…NGLRQFEKEP (96 aa)) form a disordered region. Residues 679-691 (VFSSPGGTGTPNK) show a composition bias toward polar residues. Residue S682 is modified to Phosphoserine; by CDK1. Phosphothreonine; by CDK1 occurs at positions 688 and 711. S717 is modified (phosphoserine; by CDK1). The span at 723 to 742 (SDLRPGDVSGKRNLWEKQSV) shows a compositional bias: basic and acidic residues. Positions 726–752 (RPGDVSGKRNLWEKQSVEKPAASSSKV) are weak actin-binding.

The protein belongs to the caldesmon family. Post-translationally, phosphorylated in non-muscle cells. Phosphorylation by CDK1 during mitosis causes caldesmon to dissociate from microfilaments. Phosphorylation reduces caldesmon binding to actin, myosin, and calmodulin as well as its inhibition of actomyosin ATPase activity. Phosphorylation also occurs in both quiescent and dividing smooth muscle cells with similar effects on the interaction with actin and calmodulin and on microfilaments reorganization. In terms of tissue distribution, high-molecular-weight caldesmon (h-caldesmon) is predominantly expressed in smooth muscles, whereas low-molecular-weight caldesmon (l-caldesmon) is widely distributed in non-muscle tissues and cells. Not expressed in skeletal muscle or heart.

It is found in the cytoplasm. The protein localises to the cytoskeleton. Its subcellular location is the myofibril. The protein resides in the stress fiber. In terms of biological role, actin- and myosin-binding protein implicated in the regulation of actomyosin interactions in smooth muscle and nonmuscle cells (could act as a bridge between myosin and actin filaments). Stimulates actin binding of tropomyosin which increases the stabilization of actin filament structure. In muscle tissues, inhibits the actomyosin ATPase by binding to F-actin. This inhibition is attenuated by calcium-calmodulin and is potentiated by tropomyosin. Interacts with actin, myosin, two molecules of tropomyosin and with calmodulin. Also plays an essential role during cellular mitosis and receptor capping. This is Caldesmon (CALD1) from Gallus gallus (Chicken).